We begin with the raw amino-acid sequence, 319 residues long: HTH-type transcriptional regulator YidZ (319 aa).

An HTH lysR-type domain is found at 8 to 65 (LDLNLLLCLQLLMQERSVTKAAKRMNVTPSAVSKSLAKLRAWFDDPLFVNTPLGLAPT). Residues 25-44 (VTKAAKRMNVTPSAVSKSLA) constitute a DNA-binding region (H-T-H motif).

It belongs to the LysR transcriptional regulatory family.

Its function is as follows. Involved in anaerobic NO protection. The sequence is that of HTH-type transcriptional regulator YidZ from Salmonella heidelberg (strain SL476).